The sequence spans 753 residues: Probable phosphoenolpyruvate synthase (753 aa).

Residue His398 is the Tele-phosphohistidine intermediate of the active site. Residues Arg488, Arg535, Glu631, Gly653, Thr654, Asn655, and Asp656 each coordinate substrate. Glu631 is a binding site for Mg(2+). Asp656 serves as a coordination point for Mg(2+). Residue Cys703 is the Proton donor of the active site.

The protein belongs to the PEP-utilizing enzyme family. It depends on Mg(2+) as a cofactor.

The enzyme catalyses pyruvate + ATP + H2O = phosphoenolpyruvate + AMP + phosphate + 2 H(+). It functions in the pathway carbohydrate biosynthesis; gluconeogenesis. Functionally, catalyzes the phosphorylation of pyruvate to phosphoenolpyruvate. The chain is Probable phosphoenolpyruvate synthase (ppsA) from Archaeoglobus fulgidus (strain ATCC 49558 / DSM 4304 / JCM 9628 / NBRC 100126 / VC-16).